Here is a 79-residue protein sequence, read N- to C-terminus: Acyl carrier protein (79 aa).

In terms of domain architecture, Carrier spans 2–77 (SDVAERVKKI…DAVNFLEKAT (76 aa)). Ser37 is subject to O-(pantetheine 4'-phosphoryl)serine.

The protein belongs to the acyl carrier protein (ACP) family. In terms of processing, 4'-phosphopantetheine is transferred from CoA to a specific serine of apo-ACP by AcpS. This modification is essential for activity because fatty acids are bound in thioester linkage to the sulfhydryl of the prosthetic group.

The protein localises to the cytoplasm. It participates in lipid metabolism; fatty acid biosynthesis. Its function is as follows. Carrier of the growing fatty acid chain in fatty acid biosynthesis. This chain is Acyl carrier protein, found in Methylocella silvestris (strain DSM 15510 / CIP 108128 / LMG 27833 / NCIMB 13906 / BL2).